Consider the following 297-residue polypeptide: AKT-interacting protein (297 aa).

Residues 1-13 (MNLNPFWSMSTNT) are compositionally biased toward polar residues. Residues 1 to 45 (MNLNPFWSMSTNTGRKRSDGEEQSGEQQQQQRASPARPSFGKKQL) form a disordered region. Low complexity predominate over residues 25–39 (GEQQQQQRASPARPS). Residues 79 to 227 (YLEYSLLAEF…VVDSVKLCNS (149 aa)) form the UBC core domain. A disordered region spans residues 262–297 (KRRPEDHHKGLQVSGLSWVKPGSTQPFSKDDNPPQN).

It belongs to the ubiquitin-conjugating enzyme family. FTS subfamily.

It localises to the cytoplasm. It is found in the cell membrane. Functionally, may function to promote vesicle trafficking and/or fusion. May also regulate apoptosis. This is AKT-interacting protein (aktip) from Salmo salar (Atlantic salmon).